We begin with the raw amino-acid sequence, 96 residues long: Evasin P1074 (96 aa).

A signal peptide spans 1 to 28 (MAFNMITFLQMAVFVVILFNINLHSASA). 3 disulfides stabilise this stretch: C48–C67, C52–C69, and C63–C80. N74 carries an N-linked (GlcNAc...) asparagine glycan.

The protein localises to the secreted. Its function is as follows. Salivary chemokine-binding protein which binds to host chemokines CXCL1 and CXCL8. In Ixodes ricinus (Common tick), this protein is Evasin P1074.